A 100-amino-acid polypeptide reads, in one-letter code: Co-chaperonin GroES (100 aa).

This sequence belongs to the GroES chaperonin family. Heptamer of 7 subunits arranged in a ring. Interacts with the chaperonin GroEL.

It localises to the cytoplasm. In terms of biological role, together with the chaperonin GroEL, plays an essential role in assisting protein folding. The GroEL-GroES system forms a nano-cage that allows encapsulation of the non-native substrate proteins and provides a physical environment optimized to promote and accelerate protein folding. GroES binds to the apical surface of the GroEL ring, thereby capping the opening of the GroEL channel. This is Co-chaperonin GroES from Mycobacterium marinum (strain ATCC BAA-535 / M).